A 485-amino-acid polypeptide reads, in one-letter code: Noelin (485 aa).

Residues 1–24 (MSVPLLKIGVVLSTMAMITNWMSQ) form the signal peptide. Asn-33, Asn-103, Asn-187, Asn-288, Asn-307, Asn-394, Asn-431, and Asn-473 each carry an N-linked (GlcNAc...) asparagine glycan. Residues 87-225 (RDARTKQLRQ…ERLRACMQKL (139 aa)) are a coiled coil. Residues 226–478 (ACGKLTGISD…QTLYNVTLFH (253 aa)) form the Olfactomedin-like domain. Cys-227 and Cys-409 are disulfide-bonded.

As to quaternary structure, homotetramer; disulfide-linked. Dimer of dimers, giving rise to a V-shaped homotretramer. Isoform 1 and isoform 3 interact with RTN4R. Identified in a complex with RTN4R and LINGO1. Peripherally associated with AMPAR complex. AMPAR complex consists of an inner core made of 4 pore-forming GluA/GRIA proteins (GRIA1, GRIA2, GRIA3 and GRIA4) and 4 major auxiliary subunits arranged in a twofold symmetry. One of the two pairs of distinct binding sites is occupied either by CNIH2, CNIH3 or CACNG2, CACNG3. The other harbors CACNG2, CACNG3, CACNG4, CACNG8 or GSG1L. This inner core of AMPAR complex is complemented by outer core constituents binding directly to the GluA/GRIA proteins at sites distinct from the interaction sites of the inner core constituents. Outer core constituents include at least PRRT1, PRRT2, CKAMP44/SHISA9, FRRS1L and NRN1. The proteins of the inner and outer core serve as a platform for other, more peripherally associated AMPAR constituents, including OLFM1. Alone or in combination, these auxiliary subunits control the gating and pharmacology of the AMPAR complex and profoundly impact their biogenesis and protein processing. Interacts with OLFM2. In terms of processing, in isoform 3 and isoform 4, the signal peptide is predicted to end in position 17. In terms of tissue distribution, expressed in the brain (at protein level). Expressed in the brain, predominantly in the cortex and hippocampus. In the pituitary only the two A-type and in the adrenal glands only the two B-type forms were detected.

It localises to the secreted. Its subcellular location is the synapse. The protein localises to the endoplasmic reticulum. It is found in the cell projection. The protein resides in the axon. It localises to the perikaryon. Contributes to the regulation of axonal growth in the embryonic and adult central nervous system by inhibiting interactions between RTN4R and LINGO1. Inhibits RTN4R-mediated axon growth cone collapse. May play an important role in regulating the production of neural crest cells by the neural tube. May be required for normal responses to olfactory stimuli. The polypeptide is Noelin (Olfm1) (Rattus norvegicus (Rat)).